Reading from the N-terminus, the 371-residue chain is Queuine tRNA-ribosyltransferase (371 aa).

The Proton acceptor role is filled by D93. Residues 93-97, D147, Q191, and G218 contribute to the substrate site; that span reads DSGGF. Positions 249 to 255 are RNA binding; sequence GVGTVVD. D268 functions as the Nucleophile in the catalytic mechanism. Residues 273–277 are RNA binding; important for wobble base 34 recognition; it reads TRNAR. Zn(2+) is bound by residues C306, C308, C311, and H337.

It belongs to the queuine tRNA-ribosyltransferase family. In terms of assembly, homodimer. Within each dimer, one monomer is responsible for RNA recognition and catalysis, while the other monomer binds to the replacement base PreQ1. It depends on Zn(2+) as a cofactor.

The catalysed reaction is 7-aminomethyl-7-carbaguanine + guanosine(34) in tRNA = 7-aminomethyl-7-carbaguanosine(34) in tRNA + guanine. It participates in tRNA modification; tRNA-queuosine biosynthesis. In terms of biological role, catalyzes the base-exchange of a guanine (G) residue with the queuine precursor 7-aminomethyl-7-deazaguanine (PreQ1) at position 34 (anticodon wobble position) in tRNAs with GU(N) anticodons (tRNA-Asp, -Asn, -His and -Tyr). Catalysis occurs through a double-displacement mechanism. The nucleophile active site attacks the C1' of nucleotide 34 to detach the guanine base from the RNA, forming a covalent enzyme-RNA intermediate. The proton acceptor active site deprotonates the incoming PreQ1, allowing a nucleophilic attack on the C1' of the ribose to form the product. After dissociation, two additional enzymatic reactions on the tRNA convert PreQ1 to queuine (Q), resulting in the hypermodified nucleoside queuosine (7-(((4,5-cis-dihydroxy-2-cyclopenten-1-yl)amino)methyl)-7-deazaguanosine). This chain is Queuine tRNA-ribosyltransferase, found in Leptospira biflexa serovar Patoc (strain Patoc 1 / Ames).